Here is a 156-residue protein sequence, read N- to C-terminus: Small ribosomal subunit protein bS6 (156 aa).

The interval 95–156 (AITETSPLAK…DRDEQSEDSE (62 aa)) is disordered. Residues 117–126 (RSGRDRDESG) are compositionally biased toward basic and acidic residues.

The protein belongs to the bacterial ribosomal protein bS6 family.

Binds together with bS18 to 16S ribosomal RNA. This Nitrosococcus oceani (strain ATCC 19707 / BCRC 17464 / JCM 30415 / NCIMB 11848 / C-107) protein is Small ribosomal subunit protein bS6.